Reading from the N-terminus, the 112-residue chain is Cell cycle protein GpsB (112 aa).

Residues 42-77 (YQKMADMNNEVVKLSEENHKLKKELEELRLRVATSR) adopt a coiled-coil conformation. Residues 74–96 (ATSRPQDNKNFSSNNSSSASNNV) form a disordered region. Positions 81–95 (NKNFSSNNSSSASNN) are enriched in low complexity.

This sequence belongs to the GpsB family. In terms of assembly, forms polymers through the coiled coil domains. Interacts with PBP1, MreC and EzrA.

Its subcellular location is the cytoplasm. Divisome component that associates with the complex late in its assembly, after the Z-ring is formed, and is dependent on DivIC and PBP2B for its recruitment to the divisome. Together with EzrA, is a key component of the system that regulates PBP1 localization during cell cycle progression. Its main role could be the removal of PBP1 from the cell pole after pole maturation is completed. Also contributes to the recruitment of PBP1 to the division complex. Not essential for septum formation. This is Cell cycle protein GpsB from Staphylococcus epidermidis (strain ATCC 12228 / FDA PCI 1200).